The following is a 349-amino-acid chain: UDP-N-acetylenolpyruvoylglucosamine reductase (349 aa).

The region spanning 24 to 197 (FGIAATARFA…VSVTFRLPKQ (174 aa)) is the FAD-binding PCMH-type domain. The active site involves Arg-173. Ser-249 functions as the Proton donor in the catalytic mechanism. The active site involves Glu-345.

This sequence belongs to the MurB family. It depends on FAD as a cofactor.

The protein localises to the cytoplasm. It carries out the reaction UDP-N-acetyl-alpha-D-muramate + NADP(+) = UDP-N-acetyl-3-O-(1-carboxyvinyl)-alpha-D-glucosamine + NADPH + H(+). It functions in the pathway cell wall biogenesis; peptidoglycan biosynthesis. Its function is as follows. Cell wall formation. In Burkholderia lata (strain ATCC 17760 / DSM 23089 / LMG 22485 / NCIMB 9086 / R18194 / 383), this protein is UDP-N-acetylenolpyruvoylglucosamine reductase.